The chain runs to 552 residues: Glutamine-dependent NAD(+) synthetase (552 aa).

The region spanning 5–245 (FRITLAQLNP…EAVVHVDLER (241 aa)) is the CN hydrolase domain. E45 acts as the Proton acceptor; for glutaminase activity in catalysis. The active-site For glutaminase activity is K113. The Nucleophile; for glutaminase activity role is filled by C149. L-glutamine is bound by residues S175 and K181. The tract at residues 275–552 (LQDYLRKSGF…PMVNRWRDQS (278 aa)) is ligase. ATP is bound at residue 290-297 (GLSGGIDS). A deamido-NAD(+)-binding site is contributed by N373. Position 397 (T397) interacts with ATP. Deamido-NAD(+) is bound by residues E402 and K521.

It in the C-terminal section; belongs to the NAD synthetase family.

The enzyme catalyses deamido-NAD(+) + L-glutamine + ATP + H2O = L-glutamate + AMP + diphosphate + NAD(+) + H(+). Its pathway is cofactor biosynthesis; NAD(+) biosynthesis; NAD(+) from deamido-NAD(+) (L-Gln route): step 1/1. Catalyzes the ATP-dependent amidation of deamido-NAD to form NAD. Uses L-glutamine as a nitrogen source. In Rhodobacter capsulatus (Rhodopseudomonas capsulata), this protein is Glutamine-dependent NAD(+) synthetase.